Consider the following 132-residue polypeptide: Agouti-related protein (132 aa).

Residues 1–20 (MLTAAVLSCALLLALPATRG) form the signal peptide. The propeptide occupies 21-82 (AQMGLAPMEG…VLDLQDREPR (62 aa)). Disulfide bonds link C87-C102, C94-C108, C101-C119, C105-C129, and C110-C117. In terms of domain architecture, Agouti spans 87–129 (CVRLHESCLGQQVPCCDPCATCYCRFFNAFCYCRKLGTAMNPC). Residues 111–113 (RFF) form an interaction with melanocortin receptors region.

Interacts with melanocortin receptors MC3R, MC4R and MC5R. As to expression, expressed primarily in the adrenal gland, subthalamic nucleus, and hypothalamus, with a lower level of expression occurring in testis, lung, and kidney.

Its subcellular location is the secreted. The protein resides in the golgi apparatus lumen. Plays a role in weight homeostasis. Involved in the control of feeding behavior through the central melanocortin system. Acts as alpha melanocyte-stimulating hormone antagonist by inhibiting cAMP production mediated by stimulation of melanocortin receptors within the hypothalamus and adrenal gland. Has very low activity with MC5R. Is an inverse agonist for MC3R and MC4R being able to suppress their constitutive activity. It promotes MC3R and MC4R endocytosis in an arrestin-dependent manner. This Homo sapiens (Human) protein is Agouti-related protein (AGRP).